A 338-amino-acid polypeptide reads, in one-letter code: Inositol 2-dehydrogenase 4 (338 aa).

This sequence belongs to the Gfo/Idh/MocA family. As to quaternary structure, homotetramer.

It carries out the reaction myo-inositol + NAD(+) = scyllo-inosose + NADH + H(+). In terms of biological role, involved in the oxidation of myo-inositol (MI) to 2-keto-myo-inositol (2KMI or 2-inosose). The polypeptide is Inositol 2-dehydrogenase 4 (Saccharopolyspora erythraea (strain ATCC 11635 / DSM 40517 / JCM 4748 / NBRC 13426 / NCIMB 8594 / NRRL 2338)).